A 64-amino-acid chain; its full sequence is Translational regulator CsrA (64 aa).

It belongs to the CsrA/RsmA family. As to quaternary structure, homodimer; the beta-strands of each monomer intercalate to form a hydrophobic core, while the alpha-helices form wings that extend away from the core.

It localises to the cytoplasm. Its function is as follows. A key translational regulator that binds mRNA to regulate translation initiation and/or mRNA stability. Mediates global changes in gene expression, shifting from rapid growth to stress survival by linking envelope stress, the stringent response and the catabolite repression systems. Usually binds in the 5'-UTR; binding at or near the Shine-Dalgarno sequence prevents ribosome-binding, repressing translation, binding elsewhere in the 5'-UTR can activate translation and/or stabilize the mRNA. Its function is antagonized by small RNA(s). This chain is Translational regulator CsrA, found in Methylococcus capsulatus (strain ATCC 33009 / NCIMB 11132 / Bath).